Reading from the N-terminus, the 247-residue chain is uncharacterized protein (247 aa).

This is an uncharacterized protein from Rickettsia prowazekii (strain Madrid E).